Here is a 331-residue protein sequence, read N- to C-terminus: Elongation factor Ts, mitochondrial (331 aa).

The tract at residues 254 to 295 (SPLTVGEMPEVREEEGEKKDGDKQDEEERSTDSDEDETQMLR) is disordered. Positions 262 to 275 (PEVREEEGEKKDGD) are enriched in basic and acidic residues. Acidic residues predominate over residues 276-291 (KQDEEERSTDSDEDET).

The protein belongs to the EF-Ts family.

The protein resides in the mitochondrion. Functionally, associates with the EF-Tu.GDP complex and induces the exchange of GDP to GTP. It remains bound to the aminoacyl-tRNA.EF-Tu.GTP complex up to the GTP hydrolysis stage on the ribosome. This is Elongation factor Ts, mitochondrial from Branchiostoma floridae (Florida lancelet).